A 455-amino-acid polypeptide reads, in one-letter code: UDP-glycosyltransferase 79B2 (455 aa).

Residues S266, 325–327 (VQQ), 342–350 (HCGFGSMWE), and 364–367 (LGDQ) each bind UDP-alpha-D-glucose.

The protein belongs to the UDP-glycosyltransferase family.

The polypeptide is UDP-glycosyltransferase 79B2 (UGT79B2) (Arabidopsis thaliana (Mouse-ear cress)).